The sequence spans 176 residues: MSRIGYKVIKVPAGVTITKDGDNITVKGPKGELTRHFAPEIEMHQEGDEINFTRPDDSYKAVHGTMRANLNNMVVGVTEGYKKEMKLVGVGYRAQKQGEKLVLNVGYSHPVEMTAPKGVTVEVPSTTQIIISGISKQVVGQFAAVVRSVRAPEPYKGKGIRYVDEHVRRKEGKTGK.

This sequence belongs to the universal ribosomal protein uL6 family. As to quaternary structure, part of the 50S ribosomal subunit.

Functionally, this protein binds to the 23S rRNA, and is important in its secondary structure. It is located near the subunit interface in the base of the L7/L12 stalk, and near the tRNA binding site of the peptidyltransferase center. This chain is Large ribosomal subunit protein uL6, found in Lacticaseibacillus paracasei (strain ATCC 334 / BCRC 17002 / CCUG 31169 / CIP 107868 / KCTC 3260 / NRRL B-441) (Lactobacillus paracasei).